Consider the following 254-residue polypeptide: UstYa family oxidase phomYc' (254 aa).

The chain crosses the membrane as a helical span at residues 38-58 (LVLVLQSVLIISLLASLHILG). N64 carries N-linked (GlcNAc...) asparagine glycosylation. The HXXHC 1 signature appears at 138 to 142 (HQLHC). N159 carries an N-linked (GlcNAc...) asparagine glycan. Positions 173-177 (HIDHC) match the HXXHC 2 motif.

It belongs to the ustYa family.

It localises to the membrane. Its pathway is mycotoxin biosynthesis. In terms of biological role, ustYa family oxidase; part of the gene cluster that mediates the biosynthesis of the phomopsins, a group of hexapeptide mycotoxins which infects lupins and causes lupinosis disease in livestock. Within the pathway, phomYc' catalyzes the desaturation of the Ile moiety into 2,3-dehydroisoleucine (dIle). The pathway starts with the processing of the precursor phomA' by several endopeptidases including kexin proteases as well as the cluster-specific S41 family peptidase phomP1 and the oligopeptidase phomG' to produce 10 identical copies of the hexapeptide Tyr-Val-Ile-Pro-Ile-Asp. After being excised from the precursor peptide, the core peptides are cyclized and modified post-translationally by enzymes encoded within the gene cluster. The timing and order of proteolysis of the phomA' precursor and PTMs are still unknown. Two tyrosinase-like enzymes, phomQ1' and phomQ2, catalyze the chlorination and hydroxylation of Tyr, respectively. PhomYb, is proposed to be involved in the construction of the macrocyclic structure. The other 4 ustYa family proteins may be involved in PTMs that generate the unique structure of phomopsin A. PhomYa' is required for the hydroxylation of C-beta of Tyr. PhomYc', phomYd', and phomYe are responsible for the biosynthesis of 2,3-dehydroisoleucine (dIle), 2,3-dehydroaspartic acid (dAsp), and 3,4-dehydroproline (dPro), respectively. While dIle formation by phomYc' is indispensable for the installation of dAsp by phomYd', the order of the other PTMs have not been elucidated yet. Most of the biosynthetic enzymes likely have broad substrate specificity, and thus, there might be a metabolic grid from a precursor to phomopsin A. The enzyme(s) responsible for the biosynthesis of 3,4-dehydrovaline (dVal) have also not been identified yet. Finally, phomM' acts as an S-adenosylmethionine-dependent alpha-N-methyltransferase that catalyzes two successive N-methylation reactions, converting N-desmethyl-phomopsin A to phomopsin A and phomopsin A further to an N,N-dimethylated congener called phomopsin E. The protein is UstYa family oxidase phomYc' of Diaporthe leptostromiformis (Lupinosis disease fungus).